The primary structure comprises 239 residues: Phosphoglycolate phosphatase (239 aa).

The Nucleophile role is filled by Asp14. Mg(2+)-binding residues include Asp14 and Asp16. Lys160 serves as a coordination point for substrate. Residues Asp183 and Asp187 each contribute to the Mg(2+) site.

Belongs to the archaeal SPP-like hydrolase family. It depends on Mg(2+) as a cofactor.

The enzyme catalyses 2-phosphoglycolate + H2O = glycolate + phosphate. Functionally, catalyzes the dephosphorylation of 2-phosphoglycolate. The protein is Phosphoglycolate phosphatase of Aeropyrum pernix (strain ATCC 700893 / DSM 11879 / JCM 9820 / NBRC 100138 / K1).